Reading from the N-terminus, the 181-residue chain is UPF0228 protein MA_3117 (181 aa).

This sequence belongs to the UPF0228 family.

This is UPF0228 protein MA_3117 from Methanosarcina acetivorans (strain ATCC 35395 / DSM 2834 / JCM 12185 / C2A).